The sequence spans 155 residues: UPF0060 membrane protein MA_3936 (155 aa).

3 helical membrane-spanning segments follow: residues 8 to 28 (LCPF…ICLW), 35 to 55 (AVFG…PTFQ), and 62 to 82 (VYAA…LFVD).

This sequence belongs to the UPF0060 family.

Its subcellular location is the cell membrane. This Methanosarcina acetivorans (strain ATCC 35395 / DSM 2834 / JCM 12185 / C2A) protein is UPF0060 membrane protein MA_3936.